The chain runs to 517 residues: Splicing factor U2AF 59 kDa subunit (517 aa).

Over residues 1 to 13 (MDLSSRLSSGSSR) the composition is skewed to low complexity. Positions 1-112 (MDLSSRLSSG…PSRERSVRSI (112 aa)) are disordered. The span at 20–89 (DYRDEEPRRE…RRYDDYEPRS (70 aa)) shows a compositional bias: basic and acidic residues. 2 consecutive RRM domains span residues 310-388 (DKIY…FACV) and 418-509 (RVLQ…FYGE).

It belongs to the splicing factor SR family. In terms of assembly, forms a heterodimer with the U2AF small subunit. Can also form a homodimer. U2AF large subunit (U2AF59), U2AF small subunit (U2AF23) and SF1 (bpb1) interact to form a complex required for complex A formation. Interacts with wat1/pop3.

The protein localises to the nucleus. Necessary for the splicing of pre-mRNA. The SF1-U2AF59-U2AF23 complex has a role in the recognition of the branch site (5'-UACUAAC-3'), the pyrimidine tract and the 3'-splice site at the 3'-end of introns. This chain is Splicing factor U2AF 59 kDa subunit (prp2), found in Schizosaccharomyces pombe (strain 972 / ATCC 24843) (Fission yeast).